The sequence spans 196 residues: Holliday junction branch migration complex subunit RuvA (196 aa).

The domain I stretch occupies residues 1 to 63; that stretch reads MYDYIKGKLS…DDAHLLFGFH (63 aa). Positions 64 to 142 are domain II; sequence TENEKEIFLN…EASGESATSR (79 aa). The segment at 143-148 is flexible linker; it reads KVSSEQ. Residues 148–196 are domain III; sequence QNSNLEEAMEALLALGYKATELKKVKAFFEGTNETVEQYIKSSLKMLMK.

Belongs to the RuvA family. Homotetramer. Forms an RuvA(8)-RuvB(12)-Holliday junction (HJ) complex. HJ DNA is sandwiched between 2 RuvA tetramers; dsDNA enters through RuvA and exits via RuvB. An RuvB hexamer assembles on each DNA strand where it exits the tetramer. Each RuvB hexamer is contacted by two RuvA subunits (via domain III) on 2 adjacent RuvB subunits; this complex drives branch migration. In the full resolvosome a probable DNA-RuvA(4)-RuvB(12)-RuvC(2) complex forms which resolves the HJ.

The protein localises to the cytoplasm. Its function is as follows. The RuvA-RuvB-RuvC complex processes Holliday junction (HJ) DNA during genetic recombination and DNA repair, while the RuvA-RuvB complex plays an important role in the rescue of blocked DNA replication forks via replication fork reversal (RFR). RuvA specifically binds to HJ cruciform DNA, conferring on it an open structure. The RuvB hexamer acts as an ATP-dependent pump, pulling dsDNA into and through the RuvAB complex. HJ branch migration allows RuvC to scan DNA until it finds its consensus sequence, where it cleaves and resolves the cruciform DNA. The sequence is that of Holliday junction branch migration complex subunit RuvA from Streptococcus agalactiae serotype III (strain NEM316).